Here is a 641-residue protein sequence, read N- to C-terminus: Pheromone-processing carboxypeptidase KEX1 (641 aa).

The first 35 residues, 1-35 (MASTYSTPRWRTALLGGFLTTLPWLSSGMAGKTQA), serve as a signal peptide directing secretion. At 36–515 (DYFIKSLPGA…KQAEWKAYYR (480 aa)) the chain is on the lumenal side. The N-linked (GlcNAc...) asparagine glycan is linked to asparagine 118. Residues serine 182 and aspartate 382 contribute to the active site. 2 N-linked (GlcNAc...) asparagine glycosylation sites follow: asparagine 433 and asparagine 441. Histidine 444 is an active-site residue. A disordered region spans residues 472–502 (VPSDSRIDGEKGPLTSVGDHPNSTRAEEDKA). Asparagine 493 is a glycosylation site (N-linked (GlcNAc...) asparagine). The helical transmembrane segment at 516 to 536 (SGQVALVVVVIVAALWGIFLW) threads the bilayer. Residues 537–641 (RSRRRHTKTA…DGPKRKGGSS (105 aa)) lie on the Cytoplasmic side of the membrane. A disordered region spans residues 585–641 (RELDDLDGASKKPGNGYASLGSEKERQSHNDSTFSLGGDSDDEAGSSDGPKRKGGSS).

The protein belongs to the peptidase S10 family.

The protein resides in the golgi apparatus. It is found in the trans-Golgi network membrane. The catalysed reaction is Preferential release of a C-terminal arginine or lysine residue.. Its function is as follows. Protease with a carboxypeptidase B-like function involved in the C-terminal processing of the lysine and arginine residues from protein precursors. Promotes cell fusion and is involved in the programmed cell death. In Leptosphaeria maculans (strain JN3 / isolate v23.1.3 / race Av1-4-5-6-7-8) (Blackleg fungus), this protein is Pheromone-processing carboxypeptidase KEX1 (KEX1).